Here is a 47-residue protein sequence, read N- to C-terminus: Delta-actitoxin-Axm1g (47 aa).

3 cysteine pairs are disulfide-bonded: Cys-4–Cys-44, Cys-6–Cys-34, and Cys-27–Cys-45.

Belongs to the sea anemone sodium channel inhibitory toxin family. Type I subfamily.

It is found in the secreted. The protein resides in the nematocyst. This is Delta-actitoxin-Axm1g from Anthopleura xanthogrammica (Giant green sea anemone).